The primary structure comprises 179 residues: MEIRDNNKVNLCFAFDNLRKELSRPYGILFTNNKVFLDFVSKSIQQGFKVITVGDYVSRVLEENGIIPFLEVIDGKTKRSIPQHRAIVKNKEYRVTNEAGKIQFEIFEIIENILKDRDGGVVFVNGEEDLLVIPVILSANNGDIVIYGQPNAGAVVIIVNEMIKWRVRDILEKAVVEEC.

Residues aspartate 55, valine 57, aspartate 74, lysine 76, and glutamate 128 each coordinate GTP.

It belongs to the GTP-dependent DPCK family.

The enzyme catalyses 3'-dephospho-CoA + GTP = GDP + CoA + H(+). It functions in the pathway cofactor biosynthesis; coenzyme A biosynthesis. In terms of biological role, catalyzes the GTP-dependent phosphorylation of the 3'-hydroxyl group of dephosphocoenzyme A to form coenzyme A (CoA). In Saccharolobus islandicus (strain M.16.4 / Kamchatka #3) (Sulfolobus islandicus), this protein is GTP-dependent dephospho-CoA kinase.